The following is a 223-amino-acid chain: uncharacterized protein (223 aa).

The protein to M.jannaschii MJ0575.

This is an uncharacterized protein from Methanocaldococcus jannaschii (strain ATCC 43067 / DSM 2661 / JAL-1 / JCM 10045 / NBRC 100440) (Methanococcus jannaschii).